A 258-amino-acid chain; its full sequence is Phosphate import ATP-binding protein PstB 1 (258 aa).

The ABC transporter domain maps to 5–247 (LDLTDVNIYY…EKIFSNPNQK (243 aa)). 37 to 44 (GPSGCGKT) is an ATP binding site.

Belongs to the ABC transporter superfamily. Phosphate importer (TC 3.A.1.7) family. The complex is composed of two ATP-binding proteins (PstB), two transmembrane proteins (PstC and PstA) and a solute-binding protein (PstS).

Its subcellular location is the cell membrane. The catalysed reaction is phosphate(out) + ATP + H2O = ADP + 2 phosphate(in) + H(+). Its function is as follows. Part of the ABC transporter complex PstSACB involved in phosphate import. Responsible for energy coupling to the transport system. This is Phosphate import ATP-binding protein PstB 1 from Mycobacterium bovis (strain ATCC BAA-935 / AF2122/97).